The sequence spans 133 residues: MRTVSMAALVVIAAALAWTSSAEPAPAPAPGEEACGKVVQDIMPCLHFVKGEEKEPSKECCSGTKKLSEEVKTTEQKREACKCIVRATKGISGIKNELVAEVPKKCDIKTTLPPITADFDCSKIQSTIFRGYY.

The first 31 residues, 1-31, serve as a signal peptide directing secretion; the sequence is MRTVSMAALVVIAAALAWTSSAEPAPAPAPG. Intrachain disulfides connect cysteine 35-cysteine 83, cysteine 45-cysteine 60, cysteine 61-cysteine 106, and cysteine 81-cysteine 121.

The protein belongs to the plant LTP family.

Its function is as follows. Plant non-specific lipid-transfer proteins transfer phospholipids as well as galactolipids across membranes. May play a role in wax or cutin deposition in the cell walls of expanding epidermal cells and certain secretory tissues. In Parietaria judaica (Pellitory-of-the-wall), this protein is Probable non-specific lipid-transfer protein 2.